Here is a 966-residue protein sequence, read N- to C-terminus: Alanine--tRNA ligase (966 aa).

Positions 646, 650, 750, and 754 each coordinate Zn(2+). Residues 927–949 (DRLGGGGGGRPSLASAGGRDPEA) form a disordered region.

It belongs to the class-II aminoacyl-tRNA synthetase family. Zn(2+) serves as cofactor.

It is found in the cytoplasm. It carries out the reaction tRNA(Ala) + L-alanine + ATP = L-alanyl-tRNA(Ala) + AMP + diphosphate. In terms of biological role, catalyzes the attachment of alanine to tRNA(Ala) in a two-step reaction: alanine is first activated by ATP to form Ala-AMP and then transferred to the acceptor end of tRNA(Ala). Also edits incorrectly charged Ser-tRNA(Ala) and Gly-tRNA(Ala) via its editing domain. The polypeptide is Alanine--tRNA ligase (Salinibacter ruber (strain DSM 13855 / M31)).